Consider the following 143-residue polypeptide: Large ribosomal subunit protein uL11 (143 aa).

The protein belongs to the universal ribosomal protein uL11 family. In terms of assembly, part of the ribosomal stalk of the 50S ribosomal subunit. Interacts with L10 and the large rRNA to form the base of the stalk. L10 forms an elongated spine to which L12 dimers bind in a sequential fashion forming a multimeric L10(L12)X complex. Post-translationally, one or more lysine residues are methylated.

Its function is as follows. Forms part of the ribosomal stalk which helps the ribosome interact with GTP-bound translation factors. This chain is Large ribosomal subunit protein uL11, found in Paraburkholderia phytofirmans (strain DSM 17436 / LMG 22146 / PsJN) (Burkholderia phytofirmans).